We begin with the raw amino-acid sequence, 229 residues long: MNKLNEALKKAERIVFLTGAGVSVPSGIPDYRSKNGLYAGMSSPEYMLSHTCLVREPEKFYQFVTENMYYPNAVPNVIHKKMAEIETEKDVTIITQNIDGLHEKAGSKKVVNFHGSLYHCYCQNCGMTVTAKDYLKSDIHTDCGGVIRPDVVLYEEAISESAIDQSLTAIRKADLIVIVGTSFRVSPFCNLTDYRNKKARIFAVNKERISLPYPFEMMESDAVKVFEEI.

One can recognise a Deacetylase sirtuin-type domain in the interval 1–229 (MNKLNEALKK…SDAVKVFEEI (229 aa)). NAD(+)-binding residues include Ala20, Arg32, Gln96, Ile98, Asp99, His114, Thr181, Ser182, Asn205, and Val223. Nicotinamide is bound by residues Ile98 and Asp99. His114 functions as the Proton acceptor in the catalytic mechanism.

It belongs to the sirtuin family. Class U subfamily.

It is found in the cytoplasm. The catalysed reaction is N(6)-acetyl-L-lysyl-[protein] + NAD(+) + H2O = 2''-O-acetyl-ADP-D-ribose + nicotinamide + L-lysyl-[protein]. In terms of biological role, NAD-dependent protein deacetylase which modulates the activities of several enzymes which are inactive in their acetylated form. The polypeptide is NAD-dependent protein deacetylase (Listeria monocytogenes serovar 1/2a (strain ATCC BAA-679 / EGD-e)).